The primary structure comprises 113 residues: uncharacterized protein (113 aa).

The segment at 31–113 is disordered; sequence SNNNNNNNNN…YSPTKFNLQY (83 aa). The segment covering 32–98 has biased composition (low complexity); it reads NNNNNNNNNN…NNNNNNNNNN (67 aa). The span at 99-113 shows a compositional bias: polar residues; the sequence is SSSFEYSPTKFNLQY.

This is an uncharacterized protein from Dictyostelium discoideum (Social amoeba).